Here is a 658-residue protein sequence, read N- to C-terminus: Staphylocoagulase (658 aa).

A signal peptide spans 1 to 26 (MKKQIISLGALAVASSLFTWDNKADA). Composition is skewed to polar residues over residues 391–406 (MEQNRPSLSDNYTQPT), 428–440 (GTESTLKGIQGES), 499–514 (PSETNAYNVTTNQDGT), and 521–531 (PTQNKPSETNA). The segment at 391–531 (MEQNRPSLSD…TQNKPSETNA (141 aa)) is disordered. 6 consecutive repeat copies span residues 492 to 518 (ARPRFNKPSETNAYNVTTNQDGTVSYG), 519 to 545 (ARPTQNKPSETNAYNVTTHANGQVSYG), 546 to 572 (ARPTQNKPSKTNAYNVTTHANGQVSYG), 573 to 599 (ARPTQKKPSKTNAYNVTTHANGQVSYG), 600 to 626 (ARPTYKKPSETNAYNVTTHANGQVSYG), and 627 to 653 (ARPTQKKPSETNAYNVTTHADGTATYG). Residues 492 to 653 (ARPRFNKPSE…THADGTATYG (162 aa)) form a 6 X 27 AA tandem repeats of A-R-P-[RT]-[FQY]-[NK]-K-P-S-[EK]-T-N-A-Y-N-V-T-T-[NH]-[QA]-[DN]-G-[TQ]-[VA]-[ST]-Y-G region. A disordered region spans residues 619–658 (ANGQVSYGARPTQKKPSETNAYNVTTHADGTATYGPRVTK). Over residues 636–646 (ETNAYNVTTHA) the composition is skewed to polar residues.

The protein belongs to the staphylocoagulase family.

Functionally, staphylocoagulase is an extracellular protein which specifically forms a complex with human prothrombin. This complex named staphylothrombin can clot fibrinogen without any proteolytic cleavage of prothrombin. The polypeptide is Staphylocoagulase (Staphylococcus aureus).